A 151-amino-acid polypeptide reads, in one-letter code: Deoxyuridine 5'-triphosphate nucleotidohydrolase (151 aa).

Substrate contacts are provided by residues 71–73 (RSG), Asn84, and 88–90 (TID).

This sequence belongs to the dUTPase family. Mg(2+) is required as a cofactor.

It carries out the reaction dUTP + H2O = dUMP + diphosphate + H(+). Its pathway is pyrimidine metabolism; dUMP biosynthesis; dUMP from dCTP (dUTP route): step 2/2. Its function is as follows. This enzyme is involved in nucleotide metabolism: it produces dUMP, the immediate precursor of thymidine nucleotides and it decreases the intracellular concentration of dUTP so that uracil cannot be incorporated into DNA. The sequence is that of Deoxyuridine 5'-triphosphate nucleotidohydrolase from Gluconobacter oxydans (strain 621H) (Gluconobacter suboxydans).